Consider the following 133-residue polypeptide: ATP synthase epsilon chain, sodium ion specific (133 aa).

Belongs to the ATPase epsilon chain family. As to quaternary structure, F-type ATPases have 2 components, CF(1) - the catalytic core - and CF(0) - the membrane proton channel. CF(1) has five subunits: alpha(3), beta(3), gamma(1), delta(1), epsilon(1). CF(0) has three main subunits: a, b and c.

Its subcellular location is the cell membrane. Its activity is regulated as follows. Inhibited by nitrate. Its function is as follows. Produces ATP from ADP in the presence of a sodium gradient across the membrane. This chain is ATP synthase epsilon chain, sodium ion specific (atpC), found in Acetobacterium woodii (strain ATCC 29683 / DSM 1030 / JCM 2381 / KCTC 1655 / WB1).